Consider the following 250-residue polypeptide: 2,3-bisphosphoglycerate-dependent phosphoglycerate mutase (250 aa).

Substrate is bound by residues 10 to 17 (RHGESQWN), 23 to 24 (TG), arginine 62, 89 to 92 (ERHY), lysine 100, 116 to 117 (RR), and 185 to 186 (GN). Histidine 11 functions as the Tele-phosphohistidine intermediate in the catalytic mechanism. The active-site Proton donor/acceptor is the glutamate 89.

This sequence belongs to the phosphoglycerate mutase family. BPG-dependent PGAM subfamily. In terms of assembly, homodimer.

It carries out the reaction (2R)-2-phosphoglycerate = (2R)-3-phosphoglycerate. The protein operates within carbohydrate degradation; glycolysis; pyruvate from D-glyceraldehyde 3-phosphate: step 3/5. In terms of biological role, catalyzes the interconversion of 2-phosphoglycerate and 3-phosphoglycerate. This chain is 2,3-bisphosphoglycerate-dependent phosphoglycerate mutase, found in Salmonella dublin (strain CT_02021853).